Consider the following 155-residue polypeptide: uncharacterized protein (155 aa).

The signal sequence occupies residues Met1–Ala21. Positions Gly35–Val155 are disordered. Over residues Ala118–Ala128 the composition is skewed to polar residues.

This is an uncharacterized protein from Schizosaccharomyces pombe (strain 972 / ATCC 24843) (Fission yeast).